A 179-amino-acid chain; its full sequence is MEVRNNNKVNLCFSFDNLRNELSRPYGILFINNKIFLEFISKSIQRGSRIITVGDYVSRVLEENGIVPFLEVIDGKTKRTITQNRAITRNKEYKVTNEAGKIRFEIFEIMENILKDREGGVVFVDGEEDLLVIPVTLSANHGDIVIYGQPNAGAVVIIVNEMIRWRVRDILEKAIVKEC.

5 residues coordinate GTP: aspartate 55, valine 57, aspartate 74, lysine 76, and glutamate 128.

It belongs to the GTP-dependent DPCK family.

It catalyses the reaction 3'-dephospho-CoA + GTP = GDP + CoA + H(+). It functions in the pathway cofactor biosynthesis; coenzyme A biosynthesis. Catalyzes the GTP-dependent phosphorylation of the 3'-hydroxyl group of dephosphocoenzyme A to form coenzyme A (CoA). In Saccharolobus solfataricus (strain ATCC 35092 / DSM 1617 / JCM 11322 / P2) (Sulfolobus solfataricus), this protein is GTP-dependent dephospho-CoA kinase.